Consider the following 458-residue polypeptide: BTB/POZ domain-containing protein At5g41330 (458 aa).

The region spanning 11-72 (NVVSINVGGR…LRTGNLPARS (62 aa)) is the BTB domain. WD repeat units follow at residues 259–305 (DSAI…MVWE), 360–399 (LNERRGVGSKIESYGNHVFCSSKGSGIELWSEVITGLVGN), and 421–458 (SGENKITGLAFGGNRMFVTRKDQQSVQVWQSPSRGISI).

It participates in protein modification; protein ubiquitination. May act as a substrate-specific adapter of an E3 ubiquitin-protein ligase complex (CUL3-RBX1-BTB) which mediates the ubiquitination and subsequent proteasomal degradation of target proteins. This Arabidopsis thaliana (Mouse-ear cress) protein is BTB/POZ domain-containing protein At5g41330.